The sequence spans 846 residues: cGMP-dependent protein kinase (846 aa).

The autoinhibitory segment stretch occupies residues 1 to 22; sequence MRCNERNKKKAIFSNDDFSGED. CNMP-binding domain regions lie at residues 51-166, 169-268, 288-391, and 411-510; these read VCST…FIDS, VFDM…IVLG, IFRQ…LGDN, and IFRY…LQII. 3',5'-cyclic GMP contacts are provided by Lys-106, Gly-115, Glu-116, Ala-118, Arg-125, and Ser-126. Positions 466, 475, 476, 478, 485, and 486 each coordinate 3',5'-cyclic GMP. One can recognise a Protein kinase domain in the interval 534-791; that stretch reads LETERIIGRG…FKDIKEHAFF (258 aa). Residues 540-548 and Lys-563 contribute to the ATP site; that span reads IGRGTFGTV. Residue Asp-657 is the Proton acceptor of the active site. The AGC-kinase C-terminal domain maps to 792-846; it reads GNFNWDKLAGRLLEPPLVSKGETYAEDIDIKQIEEEDALNEGEPLDGDDSWDVDF. A disordered region spans residues 824-846; it reads IEEEDALNEGEPLDGDDSWDVDF. The segment covering 825 to 846 has biased composition (acidic residues); that stretch reads EEEDALNEGEPLDGDDSWDVDF.

It belongs to the protein kinase superfamily. AGC Ser/Thr protein kinase family. cGMP subfamily. In terms of assembly, monomer. Requires Mg(2+) as cofactor. Autophosphorylated.

It is found in the cytoplasm. The protein localises to the endoplasmic reticulum membrane. The enzyme catalyses L-seryl-[protein] + ATP = O-phospho-L-seryl-[protein] + ADP + H(+). The catalysed reaction is L-threonyl-[protein] + ATP = O-phospho-L-threonyl-[protein] + ADP + H(+). Activated by cGMP. Not activated by cAMP. cGMP binding allosterically triggers a conformational change at the alpha C-helix of cGMP-binding domain 4, which bridges the regulatory and catalytic domains, causing the capping triad, composed of Arg-477, Gln-525 and Asp-526, to form and stabilize the active conformation. The cGMP-binding domains acts cooperatively to activate PKG. Serine/threonine protein kinase which acts as a downstream effector of the second messenger cGMP. Controls the release of Ca(2+) from intracellular stores by regulating phosphoinositide biosynthesis. Ca(2+) signals are essential for merozoite and sporozoite invasion and egress from host hepatocytes and erythrocytes, and, in the mosquito vector, for gametocyte activation, and ookinete and sporozoite motility. During the host liver stage, regulates the initial invasion of host hepatocytes by sporozoites by regulating sporozoite motility and microneme exocytosis. Following parasite development in the hepatocytes, required for the release of merosomes, a vesicle containing the mature merozoites. During the asexual blood stage, required for the progression from schizont to the ring stage following merozoite invasion of host erythrocytes and for merozoite egress. Regulates merozoite egress by promoting the release of exonemes and micronemes which contain proteins essential for egress. Phosphorylates CDPK1 predominantly at the late schizont stage; phosphorylation at 'Ser-64' regulates CDPK1 protein-protein interaction and phosphorylation at 'Thr-231' may regulate CDPK1 kinase activity. In the mosquito vector, required for the initiation of gametogenesis induced by xanthurenic acid, specifically the gametocyte differentiation from the crescent-shaped form to the spherical form. Required for the gliding motility of ookinetes to reach and penetrate the midgut epithelium by promoting Ca(2+)-mediated activation of CDPK1 and CDPK4. Also required for microneme secretion in ookinete by promoting Ca(2+)-mediated activation of CDPK3. This is cGMP-dependent protein kinase from Plasmodium vivax (strain Salvador I).